The following is a 298-amino-acid chain: Small ribosomal subunit protein uS3 (298 aa).

Residues 39–107 (VREYLKAKLK…PVAVNIEEVR (69 aa)) enclose the KH type-2 domain. The interval 214 to 298 (PAAVEARTDE…PAAAADGKGE (85 aa)) is disordered. Residues 219-245 (ARTDEERRPRGPRRDDRGARPGADRPA) are compositionally biased toward basic and acidic residues. Residues 277–298 (KPAVQRVRKVAAPAAAADGKGE) show a composition bias toward low complexity.

This sequence belongs to the universal ribosomal protein uS3 family. In terms of assembly, part of the 30S ribosomal subunit. Forms a tight complex with proteins S10 and S14.

Binds the lower part of the 30S subunit head. Binds mRNA in the 70S ribosome, positioning it for translation. This chain is Small ribosomal subunit protein uS3, found in Albidiferax ferrireducens (strain ATCC BAA-621 / DSM 15236 / T118) (Rhodoferax ferrireducens).